Consider the following 583-residue polypeptide: Multidrug transporter QDR2 (583 aa).

Residues 23–46 form a disordered region; that stretch reads EKYDGPDLSEVDSEDNDKMIKTNE. Residue Asn60 is glycosylated (N-linked (GlcNAc...) asparagine). The chain crosses the membrane as a helical span at residues 88–108; sequence AYTGLFSTMAGAIYYPVLSVI. An N-linked (GlcNAc...) asparagine glycan is attached at Asn120. 5 helical membrane-spanning segments follow: residues 121–141, 148–168, 178–198, 208–228, and 238–258; these read ITVV…GGLA, PVVL…ACAQ, CLQA…IGDV, VGYI…IGAG, and IFWF…IMLP. Asn267 carries an N-linked (GlcNAc...) asparagine glycan. 2 helical membrane passes run 323–342 and 354–374; these read ILLV…QTAL and VAKI…SIVT. The N-linked (GlcNAc...) asparagine glycan is linked to Asn380. 4 helical membrane passes run 432-452, 458-478, 493-513, and 524-544; these read HAAF…GWCI, LASV…ILTF, TATG…IGCL, and GVFT…FYLL.

It belongs to the major facilitator superfamily. CAR1 family.

The protein localises to the cell membrane. Multidrug resistance transporter involved in resistance to the antifungal drugs miconazole, tioconazole, clotrimazole, and ketoconazole; as well as to quinidine. Decreases the intracellular accumulation of clotrimazole in and plays a role in the extrusion of this antifungal from preloaded cells. This is Multidrug transporter QDR2 from Candida glabrata (strain ATCC 2001 / BCRC 20586 / JCM 3761 / NBRC 0622 / NRRL Y-65 / CBS 138) (Yeast).